The chain runs to 360 residues: Phenylalanine--tRNA ligase alpha subunit (360 aa).

Glu-260 lines the Mg(2+) pocket.

This sequence belongs to the class-II aminoacyl-tRNA synthetase family. Phe-tRNA synthetase alpha subunit type 1 subfamily. As to quaternary structure, tetramer of two alpha and two beta subunits. Mg(2+) serves as cofactor.

It is found in the cytoplasm. The enzyme catalyses tRNA(Phe) + L-phenylalanine + ATP = L-phenylalanyl-tRNA(Phe) + AMP + diphosphate + H(+). This is Phenylalanine--tRNA ligase alpha subunit from Rhodopseudomonas palustris (strain BisB5).